The chain runs to 177 residues: MAVMTGANTAGVDKEVATQALNAELQDKGFLLTSTEDIINWARTGSLHWMTFGLACCAVEMMHTSMPRYDAERFGIAPRASPRQSDVMIVAGTLTNKMAPALRKVYDQMPEPRYVISMGSCANGGGYYHYSYSVVRGCDRIVPVDIYVPGCPPTAEALLYGLLQLQRKIRRTGTIVR.

Residues cysteine 56, cysteine 57, cysteine 121, and cysteine 151 each contribute to the [4Fe-4S] cluster site.

Belongs to the complex I 20 kDa subunit family. NDH-1 is composed of 14 different subunits. Subunits NuoB, C, D, E, F, and G constitute the peripheral sector of the complex. [4Fe-4S] cluster is required as a cofactor.

Its subcellular location is the cell inner membrane. The enzyme catalyses a quinone + NADH + 5 H(+)(in) = a quinol + NAD(+) + 4 H(+)(out). NDH-1 shuttles electrons from NADH, via FMN and iron-sulfur (Fe-S) centers, to quinones in the respiratory chain. Couples the redox reaction to proton translocation (for every two electrons transferred, four hydrogen ions are translocated across the cytoplasmic membrane), and thus conserves the redox energy in a proton gradient. In Ruegeria pomeroyi (strain ATCC 700808 / DSM 15171 / DSS-3) (Silicibacter pomeroyi), this protein is NADH-quinone oxidoreductase subunit B.